A 385-amino-acid chain; its full sequence is Alkanesulfonate monooxygenase (385 aa).

This sequence belongs to the SsuD family.

It catalyses the reaction an alkanesulfonate + FMNH2 + O2 = an aldehyde + FMN + sulfite + H2O + 2 H(+). In terms of biological role, catalyzes the desulfonation of aliphatic sulfonates. In Paraburkholderia phymatum (strain DSM 17167 / CIP 108236 / LMG 21445 / STM815) (Burkholderia phymatum), this protein is Alkanesulfonate monooxygenase.